A 210-amino-acid polypeptide reads, in one-letter code: Kalata-B2 (210 aa).

Positions 1-22 are cleaved as a signal peptide; sequence MAKFTNCLVLSLLLAAFVGAFG. Residues 23-66 constitute a propeptide that is removed on maturation; that stretch reads AEFSEADKATLVNDIAENIQKEILGEVKTSETVLTMFLKEMQLK. The segment at residues 67–95 is a cross-link (cyclopeptide (Gly-Asp)); it reads GLPVCGETCFGGTCNTPGCSCTWPICTRD. Disulfide bonds link C71-C85, C75-C87, and C80-C92. The propeptide occupies 96-120; it reads SLPMRAGGKTSETTLHMFLKEMQLK. Positions 121–149 form a cross-link, cyclopeptide (Gly-Asp); it reads GLPVCGETCFGGTCNTPGCSCTWPICTRD. Intrachain disulfides connect C125-C139, C129-C141, and C134-C146. Residues 150–174 constitute a propeptide that is removed on maturation; that stretch reads SLPMSAGGKTSETTLHMFLKEMQLK. Residues 175-203 constitute a cross-link (cyclopeptide (Gly-Asp)); the sequence is GLPVCGETCFGGTCNTPGCSCTWPICTRD. 3 cysteine pairs are disulfide-bonded: C179/C193, C183/C195, and C188/C200. A propeptide spanning residues 204 to 210 is cleaved from the precursor; sequence SLPLVAA.

Belongs to the cyclotide family. Moebius subfamily. Kalata-B2 is a cyclic peptide which occurs in three forms: with unmodified Trp, with Trp oxidized to form N-formylkynurenine and with Trp oxidized to form kynurenine. Oxidation is enhanced by exposure to sunlight.

Its function is as follows. Probably participates in a plant defense mechanism. Inhibitory effect on the growth and development of larvae from Helicoverpa punctigera. Has hemolytic activity. The sequence is that of Kalata-B2 (OAK4) from Oldenlandia affinis.